Reading from the N-terminus, the 382-residue chain is Gap junction alpha-1 protein (382 aa).

The Cytoplasmic segment spans residues 2–23 (GDWSALGKLLDKVQAYSTAGGK). Ser5 is subject to Phosphoserine. The chain crosses the membrane as a helical span at residues 24–44 (VWLSVLFIFRILLLGTAVESA). Residues 45–76 (WGDEQSAFRCNTQQPGCENVCYDKSFPISHVR) are Extracellular-facing. Disulfide bonds link Cys54–Cys192 and Cys187–Cys198. Residues 77-97 (FWVLQIIFVSVPTLLYLAHVF) traverse the membrane as a helical segment. At 98 to 155 (YVMRKEEKLNKKEEELKVAQTDGVNVEMHLKQIEIKKFKYGIEEHGKVKMRGGLLRTY) the chain is on the cytoplasmic side. Lys144 participates in a covalent cross-link: Glycyl lysine isopeptide (Lys-Gly) (interchain with G-Cter in SUMO). A helical transmembrane segment spans residues 156–176 (IISILFKSIFEVAFLLIQWYI). The Extracellular portion of the chain corresponds to 177–207 (YGFSLSAVYTCKRDPCPHQVDCFLSRPTEKT). The chain crosses the membrane as a helical span at residues 208–228 (IFIIFMLVVSLVSLALNIIEL). The Cytoplasmic segment spans residues 229–382 (FYVFFKGVKD…SRPRPDDLEI (154 aa)). Lys237 participates in a covalent cross-link: Glycyl lysine isopeptide (Lys-Gly) (interchain with G-Cter in SUMO). An interaction with NOV region spans residues 244-382 (SDPYHTTSGA…SRPRPDDLEI (139 aa)). A Phosphotyrosine modification is found at Tyr247. 2 positions are modified to phosphoserine: Ser255 and Ser262. The interaction with UBQLN4 stretch occupies residues 264–382 (KYAYFNGCSS…SRPRPDDLEI (119 aa)). The residue at position 271 (Cys271) is an S-nitrosocysteine. Thr275 carries the phosphothreonine modification. A phosphoserine mark is found at Ser306 and Ser314. The span at 317–332 (QNRMGQAGSTISNSHA) shows a compositional bias: polar residues. Residues 317 to 382 (QNRMGQAGST…SRPRPDDLEI (66 aa)) are disordered. Phosphoserine; by CK1 is present on Ser325. At Thr326 the chain carries Phosphothreonine. Phosphoserine; by CK1 occurs at positions 328 and 330. Residues Ser344 and Ser365 each carry the phosphoserine modification. The span at 362-374 (RPSSRASSRASSR) shows a compositional bias: low complexity. Ser368 is subject to Phosphoserine; by PKC/PRKCG and PKC/PRKCD. Phosphoserine occurs at positions 369 and 373.

Belongs to the connexin family. Alpha-type (group II) subfamily. In terms of assembly, a connexon is composed of a hexamer of connexins. Interacts with SGSM3. Interacts with RIC1/CIP150. Interacts with CNST and CSNK1D. Interacts (via C-terminus) with TJP1. Interacts (via C-terminus) with SRC (via SH3 domain). Interacts (not ubiquitinated) with UBQLN4 (via UBA domain). Interacts with NOV. Interacts with TMEM65. Interacts with ANK3/ANKG and PKP2. Post-translationally, phosphorylation at Ser-325, Ser-328 and Ser-330 by CK1 modulates gap junction assembly. Phosphorylated at Ser-368 by PRKCG; phosphorylation induces disassembly of gap junction plaques and inhibition of gap junction activity. Phosphorylation at Ser-368 by PRKCD triggers its internalization into small vesicles leading to proteasome-mediated degradation. Sumoylated with SUMO1, SUMO2 and SUMO3, which may regulate the level of functional Cx43 gap junctions at the plasma membrane. May be desumoylated by SENP1 or SENP2. In terms of processing, S-nitrosylation at Cys-271 is enriched at the muscle endothelial gap junction in arteries, it augments channel permeability and may regulate of smooth muscle cell to endothelial cell communication. Post-translationally, acetylated in the developing cortex; leading to delocalization from the cell membrane.

It localises to the cell membrane. Its subcellular location is the cell junction. It is found in the gap junction. The protein resides in the endoplasmic reticulum. Its function is as follows. Gap junction protein that acts as a regulator of bladder capacity. A gap junction consists of a cluster of closely packed pairs of transmembrane channels, the connexons, through which materials of low MW diffuse from one cell to a neighboring cell. May play a critical role in the physiology of hearing by participating in the recycling of potassium to the cochlear endolymph. Negative regulator of bladder functional capacity: acts by enhancing intercellular electrical and chemical transmission, thus sensitizing bladder muscles to cholinergic neural stimuli and causing them to contract. May play a role in cell growth inhibition through the regulation of NOV expression and localization. Plays an essential role in gap junction communication in the ventricles. This chain is Gap junction alpha-1 protein (GJA1), found in Chlorocebus aethiops (Green monkey).